We begin with the raw amino-acid sequence, 546 residues long: Chaperonin GroEL 2 (546 aa).

ATP contacts are provided by residues 30–33, lysine 51, 87–91, glycine 415, and aspartate 495; these read TLGP and DGTTT.

It belongs to the chaperonin (HSP60) family. Forms a cylinder of 14 subunits composed of two heptameric rings stacked back-to-back. Interacts with the co-chaperonin GroES.

The protein resides in the cytoplasm. The catalysed reaction is ATP + H2O + a folded polypeptide = ADP + phosphate + an unfolded polypeptide.. Its function is as follows. Together with its co-chaperonin GroES, plays an essential role in assisting protein folding. The GroEL-GroES system forms a nano-cage that allows encapsulation of the non-native substrate proteins and provides a physical environment optimized to promote and accelerate protein folding. The polypeptide is Chaperonin GroEL 2 (Burkholderia cenocepacia (strain HI2424)).